Consider the following 58-residue polypeptide: UPF0339 protein MA_3316 (58 aa).

This sequence belongs to the UPF0339 family.

This Methanosarcina acetivorans (strain ATCC 35395 / DSM 2834 / JCM 12185 / C2A) protein is UPF0339 protein MA_3316.